The sequence spans 670 residues: tRNA 5-methylaminomethyl-2-thiouridine biosynthesis bifunctional protein MnmC (670 aa).

Residues Met1–Ile242 are tRNA (mnm(5)s(2)U34)-methyltransferase. The tract at residues Ile269–Glu670 is FAD-dependent cmnm(5)s(2)U34 oxidoreductase.

It in the N-terminal section; belongs to the methyltransferase superfamily. tRNA (mnm(5)s(2)U34)-methyltransferase family. In the C-terminal section; belongs to the DAO family. The cofactor is FAD.

It is found in the cytoplasm. It catalyses the reaction 5-aminomethyl-2-thiouridine(34) in tRNA + S-adenosyl-L-methionine = 5-methylaminomethyl-2-thiouridine(34) in tRNA + S-adenosyl-L-homocysteine + H(+). Its function is as follows. Catalyzes the last two steps in the biosynthesis of 5-methylaminomethyl-2-thiouridine (mnm(5)s(2)U) at the wobble position (U34) in tRNA. Catalyzes the FAD-dependent demodification of cmnm(5)s(2)U34 to nm(5)s(2)U34, followed by the transfer of a methyl group from S-adenosyl-L-methionine to nm(5)s(2)U34, to form mnm(5)s(2)U34. This is tRNA 5-methylaminomethyl-2-thiouridine biosynthesis bifunctional protein MnmC from Haemophilus influenzae (strain PittEE).